The following is a 119-amino-acid chain: Ribonuclease P protein component (119 aa).

This sequence belongs to the RnpA family. As to quaternary structure, consists of a catalytic RNA component (M1 or rnpB) and a protein subunit.

The catalysed reaction is Endonucleolytic cleavage of RNA, removing 5'-extranucleotides from tRNA precursor.. Its function is as follows. RNaseP catalyzes the removal of the 5'-leader sequence from pre-tRNA to produce the mature 5'-terminus. It can also cleave other RNA substrates such as 4.5S RNA. The protein component plays an auxiliary but essential role in vivo by binding to the 5'-leader sequence and broadening the substrate specificity of the ribozyme. The polypeptide is Ribonuclease P protein component (Syntrophomonas wolfei subsp. wolfei (strain DSM 2245B / Goettingen)).